Reading from the N-terminus, the 245-residue chain is Nodulation protein G (245 aa).

NAD(+) is bound at residue 11-35 (VTGASGGIGEAIARVLHAQGAIVGL). Residue S139 coordinates substrate. Y152 functions as the Proton acceptor in the catalytic mechanism.

It belongs to the short-chain dehydrogenases/reductases (SDR) family.

Functionally, proposed to modify Nod factor fatty acyl chain. This is Nodulation protein G (nodG) from Rhizobium sp. (strain N33).